The following is a 161-amino-acid chain: Nucleotide-binding protein lpg1167 (161 aa).

It belongs to the YajQ family.

Functionally, nucleotide-binding protein. The polypeptide is Nucleotide-binding protein lpg1167 (Legionella pneumophila subsp. pneumophila (strain Philadelphia 1 / ATCC 33152 / DSM 7513)).